Consider the following 30-residue polypeptide: Toxic protein AapA1 (30 aa).

The protein belongs to the AapA toxin family.

It is found in the cell inner membrane. Transcription of the aapA1 gene generates a full-length transcript whose folding impedes translation. Processing of the 3' end of the aapA1 message generates a shorter transcript that becomes translatable after a structural rearrangement. The processing also makes it more susceptible to forming dsRNA with IsoA1 which leads to duplex RNA degradation by RNase 3 (rnc). Functionally, may be involved in response to oxidative stress. Toxic component of a type I toxin-antitoxin (TA) system. When overexpression is induced in situ in the absence of its cognate antisense RNA antitoxin IsoA1 it leads to cell growth arrest and cell death without lysis. Neutralized by IsoA1 RNA which forms an extensive duplex with the mRNA. Binds artificial prokaryotic and eukaryotic lipid membranes, with 30-fold higher affinity for prokaryotic membranes. Molecular dynamics suggests the peptide penetrates the membrane leading to lipid reorganization and thinning of the bilayer. Induction of toxin in the absence of antitoxin RNA causes a fast conversion of cells from spiral-shaped to coccoid forms; cells have no visible membrane defects and resemble wild-type 'aging coccoids'. Toxin causes a moderate decrease in membrane potential and ATP content and alterations in peptidoglycan muropeptide abundance; GlcNAc-MurNAc dipeptides increase while GlcNAc-MurNAc tripeptides decrease (i.e. a faster phenocopy of cell aging). Deletion of all 6 AapA/IsoA TA loci in strain B128 leads to slower than wild-type conversion of H2O2-treated cells to the coccoid form. This suggests oxidative stress triggers coccoid transformation via these type I TA systems, although other factors eventually drive the morphology change. In Helicobacter pylori (strain ATCC 700392 / 26695) (Campylobacter pylori), this protein is Toxic protein AapA1.